The following is a 212-amino-acid chain: ER lumen protein-retaining receptor 2 (212 aa).

At methionine 1 to phenylalanine 4 the chain is on the lumenal side. A helical transmembrane segment spans residues arginine 5–tryptophan 24. The Cytoplasmic segment spans residues lysine 25 to isoleucine 32. The chain crosses the membrane as a helical span at residues serine 33–leucine 52. The interaction with the K-D-E-L motif on target proteins stretch occupies residues arginine 47–tyrosine 48. The Lumenal portion of the chain corresponds to threonine 53–leucine 58. The helical transmembrane segment at tyrosine 59–tyrosine 79 threads the bilayer. The Cytoplasmic portion of the chain corresponds to methionine 80–threonine 92. The chain crosses the membrane as a helical span at residues phenylalanine 93–asparagine 110. Topologically, residues histidine 111 to leucine 116 are lumenal. Residues glutamate 117–leucine 135 traverse the membrane as a helical segment. Residues phenylalanine 136–threonine 149 are Cytoplasmic-facing. A helical membrane pass occupies residues histidine 150–tryptophan 168. Residues arginine 159 to arginine 169 are interaction with the K-D-E-L motif on target proteins. Residues arginine 169–leucine 178 are Lumenal-facing. Residues isoleucine 179 to valine 199 traverse the membrane as a helical segment. The Cytoplasmic segment spans residues threonine 200–alanine 212. The segment at lysine 204 to lysine 207 is important for recycling of cargo proteins with the sequence motif K-D-E-L from the Golgi to the endoplasmic reticulum.

The protein belongs to the ERD2 family.

It localises to the endoplasmic reticulum membrane. The protein resides in the golgi apparatus membrane. The protein localises to the cytoplasmic vesicle. Its subcellular location is the COPI-coated vesicle membrane. In terms of biological role, receptor for the C-terminal sequence motif K-D-E-L that is present on endoplasmic reticulum resident proteins and that mediates their recycling from the Golgi back to the endoplasmic reticulum. Binding is pH dependent, and is optimal at pH 5-5.4. The protein is ER lumen protein-retaining receptor 2 (kdelr2) of Xenopus tropicalis (Western clawed frog).